The following is a 287-amino-acid chain: Large ribosomal subunit protein uL2 (287 aa).

2 stretches are compositionally biased toward basic residues: residues 209–220 (GRNRWKARRPKV) and 258–287 (KTRKKKKQSNKLIVRRRRRSSKRSRGGRQS). The segment at 209–287 (GRNRWKARRP…SKRSRGGRQS (79 aa)) is disordered.

This sequence belongs to the universal ribosomal protein uL2 family. As to quaternary structure, part of the 50S ribosomal subunit. Forms a bridge to the 30S subunit in the 70S ribosome.

Its function is as follows. One of the primary rRNA binding proteins. Required for association of the 30S and 50S subunits to form the 70S ribosome, for tRNA binding and peptide bond formation. It has been suggested to have peptidyltransferase activity; this is somewhat controversial. Makes several contacts with the 16S rRNA in the 70S ribosome. The chain is Large ribosomal subunit protein uL2 from Acaryochloris marina (strain MBIC 11017).